The chain runs to 555 residues: Transmembrane protein 87A (555 aa).

Residues 1 to 21 form the signal peptide; it reads MAVAAWLQVSPVIFLLLGAQP. Residues 22 to 225 lie on the Lumenal side of the membrane; the sequence is FPLSFLGAGP…YEYLTLEDYP (204 aa). Disulfide bonds link C74/C128 and C89/C431. N79, N157, and N160 each carry an N-linked (GlcNAc...) asparagine glycan. A helical membrane pass occupies residues 226 to 246; that stretch reads LMIFFMVMCIVYVLFGVLWLA. The Cytoplasmic segment spans residues 247-257; that stretch reads WSACYWRDLLR. The chain crosses the membrane as a helical span at residues 258–278; sequence IQFWIGAVIFLGMFEKAVFYA. The Lumenal segment spans residues 279–305; sequence EFQNIRYKGESVQNALVLAELLSAVKR. Residues 306-322 form a helical membrane-spanning segment; that stretch reads SLARTLVIIVSLGYGIV. At 323 to 325 the chain is on the cytoplasmic side; sequence KPR. The helical transmembrane segment at 326–346 threads the bilayer; the sequence is LGVTLHKVVVAGALYLLFSGM. The Lumenal portion of the chain corresponds to 347–361; that stretch reads EGVLRVTGAQTDLAS. A helical transmembrane segment spans residues 362–382; sequence LAFIPLAFLDTALCWWIFISL. The Cytoplasmic portion of the chain corresponds to 383–403; sequence TQTMKLLKLRRNIVKLSLYRH. A helical membrane pass occupies residues 404–424; that stretch reads FTNTLILAVAASIVFIIWTTM. The Lumenal portion of the chain corresponds to 425–437; the sequence is KFRIVTCQSDWRE. A helical transmembrane segment spans residues 438 to 458; the sequence is LWVDDAIWRLLFSMILFVIMI. Over 459–555 the chain is Cytoplasmic; sequence LWRPSANNQR…ITHFERSKME (97 aa). The interval 491–515 is disordered; it reads SFEGMKMRSTKQEPNGTSKVNKAQE. Residues 502-511 show a composition bias toward polar residues; sequence QEPNGTSKVN. S540 bears the Phosphoserine mark.

It belongs to the LU7TM family. TMEM87 subfamily. May interact with STOML3; STOML3 potentiates the mechanosensitive ion channel activity associated with TMEM87A. In terms of tissue distribution, highly expressed in sensory neurons responsive to mechanical force.

Its subcellular location is the cell membrane. The protein localises to the golgi apparatus membrane. It is found in the cell projection. It localises to the ruffle. In terms of biological role, potential monoatomic ion channel gated by mechanical force, implicated in normal touch sensitivity through the generation of mechanically activated currents. However, a direct channel activity is debated and an alternative could be that it functions as a chaperone for an unidentified mechanosensitive ion channel. Could also be involved in cell mechanosensitivity regulating cell adhesion and migration. May also be involved in retrograde transport from endosomes to the trans-Golgi network (TGN). This Mus musculus (Mouse) protein is Transmembrane protein 87A.